Reading from the N-terminus, the 182-residue chain is Coiled-coil domain-containing protein 32 (182 aa).

The span at 1 to 10 (MMIDDFETHA) shows a compositional bias: basic and acidic residues. Disordered regions lie at residues 1–61 (MMID…FSPW) and 153–182 (PTQNSETPASSSQTDKPCVEEEEECPSPEK). Over residues 153–167 (PTQNSETPASSSQTD) the composition is skewed to polar residues. Residues 172-182 (EEEEECPSPEK) show a composition bias toward acidic residues.

Associates with adaptor protein complex 2 (AP-2).

It localises to the membrane. It is found in the coated pit. Its function is as follows. Regulates clathrin-mediated endocytsois of cargos such as transferrin probably through the association and modulation of adaptor protein complex 2 (AP-2). Has a role in ciliogenesis and is required for proper cephalic and left/right axis development. This Danio rerio (Zebrafish) protein is Coiled-coil domain-containing protein 32.